The following is a 548-amino-acid chain: Membrane protein insertase YidC (548 aa).

Residues 6–26 (NLLVIALLFVSFMIWQAWEQD) form a helical membrane-spanning segment. A disordered region spans residues 28–54 (NPQPQTQQTTQTTTTAAGSAADQGVPA). Positions 29-42 (PQPQTQQTTQTTTT) are enriched in low complexity. 4 consecutive transmembrane segments (helical) span residues 350 to 370 (FVGNWGFSIIIITFIVRGIMY), 424 to 444 (FPLIIQMPIFLALYYMLMGSI), 458 to 478 (LSAQDPYYILPILMGVTMFFI), and 499 to 519 (PVIFTVFFLWFPSGLVLYYIV).

It belongs to the OXA1/ALB3/YidC family. Type 1 subfamily. In terms of assembly, interacts with the Sec translocase complex via SecD. Specifically interacts with transmembrane segments of nascent integral membrane proteins during membrane integration.

It localises to the cell inner membrane. Required for the insertion and/or proper folding and/or complex formation of integral membrane proteins into the membrane. Involved in integration of membrane proteins that insert both dependently and independently of the Sec translocase complex, as well as at least some lipoproteins. Aids folding of multispanning membrane proteins. This Salmonella arizonae (strain ATCC BAA-731 / CDC346-86 / RSK2980) protein is Membrane protein insertase YidC.